Reading from the N-terminus, the 310-residue chain is E3 ubiquitin-protein ligase AIP2 (310 aa).

The RING-type; atypical zinc-finger motif lies at 230–271; the sequence is CCICKENLVIGDKMQELPCKHTFHPPCLKPWLDEHNSCPICR. The stretch at 276–306 forms a coiled coil; it reads TDDQKYENWKEREKEAEEERKGAENAVRGGE. Residues 285–298 are compositionally biased toward basic and acidic residues; it reads KEREKEAEEERKGA. The segment at 285–310 is disordered; that stretch reads KEREKEAEEERKGAENAVRGGEYMYV.

As to quaternary structure, interacts with ABI3 (via C-terminus). In terms of processing, auto-ubiquitinated. In terms of tissue distribution, highly expressed in leaves and at lower levels in flowers and seeds.

Its subcellular location is the nucleus. It is found in the cytoplasm. It carries out the reaction S-ubiquitinyl-[E2 ubiquitin-conjugating enzyme]-L-cysteine + [acceptor protein]-L-lysine = [E2 ubiquitin-conjugating enzyme]-L-cysteine + N(6)-ubiquitinyl-[acceptor protein]-L-lysine.. The protein operates within protein modification; protein ubiquitination. Its function is as follows. E3 ubiquitin-protein ligase that acts as a negative regulator of abscisic acid (ABA) signaling. Mediates ubiquitination and subsequent proteasomal degradation of the transcription factor ABI3. The protein is E3 ubiquitin-protein ligase AIP2 (AIP2) of Arabidopsis thaliana (Mouse-ear cress).